Reading from the N-terminus, the 249-residue chain is tRNA pseudouridine synthase A (249 aa).

Residue aspartate 53 is the Nucleophile of the active site. Position 111 (tyrosine 111) interacts with substrate.

It belongs to the tRNA pseudouridine synthase TruA family. Homodimer.

The enzyme catalyses uridine(38/39/40) in tRNA = pseudouridine(38/39/40) in tRNA. Its function is as follows. Formation of pseudouridine at positions 38, 39 and 40 in the anticodon stem and loop of transfer RNAs. The polypeptide is tRNA pseudouridine synthase A (Streptococcus pneumoniae (strain P1031)).